We begin with the raw amino-acid sequence, 318 residues long: Probable RNA methyltransferase At5g51130 (318 aa).

Disordered regions lie at residues 1 to 61 (MGRD…NQEV) and 146 to 184 (NSTK…DSAE). Residues 16 to 34 (RSNENEKSVEKVVANEEKV) are compositionally biased toward basic and acidic residues. Low complexity predominate over residues 37-52 (QQKQKQQQGQQGNCNQ). The Bin3-type SAM domain maps to 82 to 318 (DPRLKVLKKE…FDRQILAFQK (237 aa)).

It belongs to the methyltransferase superfamily.

Functionally, probable RNA methyltransferase. This is Probable RNA methyltransferase At5g51130 from Arabidopsis thaliana (Mouse-ear cress).